A 346-amino-acid polypeptide reads, in one-letter code: D-erythrose-4-phosphate dehydrogenase (346 aa).

Residue 11–12 (RI) coordinates NAD(+). Substrate contacts are provided by residues 163–165 (SCT), arginine 209, 222–223 (TK), and arginine 245. Residue cysteine 164 is the Nucleophile of the active site. Residue asparagine 327 coordinates NAD(+).

This sequence belongs to the glyceraldehyde-3-phosphate dehydrogenase family. Epd subfamily. As to quaternary structure, homotetramer.

It is found in the cytoplasm. It catalyses the reaction D-erythrose 4-phosphate + NAD(+) + H2O = 4-phospho-D-erythronate + NADH + 2 H(+). The protein operates within cofactor biosynthesis; pyridoxine 5'-phosphate biosynthesis; pyridoxine 5'-phosphate from D-erythrose 4-phosphate: step 1/5. In terms of biological role, catalyzes the NAD-dependent conversion of D-erythrose 4-phosphate to 4-phosphoerythronate. This chain is D-erythrose-4-phosphate dehydrogenase, found in Vibrio vulnificus (strain CMCP6).